The sequence spans 511 residues: Coatomer subunit delta (511 aa).

A compositionally biased stretch (basic and acidic residues) spans 168–177 (QARRDAERQG). The segment at 168–188 (QARRDAERQGKKAPGFGGFGS) is disordered. S223 carries the phosphoserine modification. An N6-acetyllysine mark is found at K233 and K241. Residue S244 is modified to Phosphoserine. The MHD domain maps to 271–511 (MESVHMKIEE…TFLVDKYEIL (241 aa)). K309 and K351 each carry N6-acetyllysine. Phosphoserine is present on S493.

It belongs to the adaptor complexes medium subunit family. Delta-COP subfamily. Oligomeric complex that consists of at least the alpha, beta, beta', gamma, delta, epsilon and zeta subunits.

It localises to the cytoplasm. The protein resides in the golgi apparatus membrane. It is found in the cytoplasmic vesicle. Its subcellular location is the COPI-coated vesicle membrane. In terms of biological role, the coatomer is a cytosolic protein complex that binds to dilysine motifs and reversibly associates with Golgi non-clathrin-coated vesicles, which further mediate biosynthetic protein transport from the ER, via the Golgi up to the trans Golgi network. Coatomer complex is required for budding from Golgi membranes, and is essential for the retrograde Golgi-to-ER transport of dilysine-tagged proteins. In mammals, the coatomer can only be recruited by membranes associated to ADP-ribosylation factors (ARFs), which are small GTP-binding proteins; the complex also influences the Golgi structural integrity, as well as the processing, activity, and endocytic recycling of LDL receptors. The polypeptide is Coatomer subunit delta (Arcn1) (Rattus norvegicus (Rat)).